The following is a 200-amino-acid chain: NADH-quinone oxidoreductase subunit C (200 aa).

Belongs to the complex I 30 kDa subunit family. NDH-1 is composed of 14 different subunits. Subunits NuoB, C, D, E, F, and G constitute the peripheral sector of the complex.

It is found in the cell inner membrane. It carries out the reaction a quinone + NADH + 5 H(+)(in) = a quinol + NAD(+) + 4 H(+)(out). Functionally, NDH-1 shuttles electrons from NADH, via FMN and iron-sulfur (Fe-S) centers, to quinones in the respiratory chain. The immediate electron acceptor for the enzyme in this species is believed to be ubiquinone. Couples the redox reaction to proton translocation (for every two electrons transferred, four hydrogen ions are translocated across the cytoplasmic membrane), and thus conserves the redox energy in a proton gradient. This Burkholderia cenocepacia (strain HI2424) protein is NADH-quinone oxidoreductase subunit C.